A 211-amino-acid chain; its full sequence is Protein-methionine-sulfoxide reductase heme-binding subunit MsrQ (211 aa).

Transmembrane regions (helical) follow at residues 10-30 (WLKV…VWAI), 82-102 (LWCF…ELGV), 116-136 (PYLT…FTST), 153-173 (FVYL…KIIS), and 178-198 (IYAG…LSLF).

It belongs to the MsrQ family. Heterodimer of a catalytic subunit (MsrP) and a heme-binding subunit (MsrQ). FMN serves as cofactor. The cofactor is heme b.

The protein resides in the cell inner membrane. Part of the MsrPQ system that repairs oxidized periplasmic proteins containing methionine sulfoxide residues (Met-O), using respiratory chain electrons. Thus protects these proteins from oxidative-stress damage caused by reactive species of oxygen and chlorine generated by the host defense mechanisms. MsrPQ is essential for the maintenance of envelope integrity under bleach stress, rescuing a wide series of structurally unrelated periplasmic proteins from methionine oxidation, including the primary periplasmic chaperone SurA and the lipoprotein Pal. MsrQ provides electrons for reduction to the reductase catalytic subunit MsrP, using the quinone pool of the respiratory chain. This Escherichia coli (strain 55989 / EAEC) protein is Protein-methionine-sulfoxide reductase heme-binding subunit MsrQ.